Reading from the N-terminus, the 1053-residue chain is Integrin alpha-3 (1053 aa).

The N-terminal stretch at 1–32 is a signal peptide; sequence MGPGPCRVPRAPGWLLRALALMVAACGRVAFA. Topologically, residues 33 to 993 are extracellular; sequence FNLDTRFLVV…LVEELPAEIE (961 aa). FG-GAP repeat units follow at residues 38–103, 110–171, 185–235, 236–293, 294–355, 357–412, and 416–478; these read RFLV…KDDC, EKSD…DLQL, CNSN…WDLS, EYSY…GGDL, QRKQ…ASFP, QPSL…GLLR, and QIIH…VARP. An N-linked (GlcNAc...) asparagine glycan is attached at asparagine 86. 3 disulfides stabilise this stretch: cysteine 94/cysteine 103, cysteine 140/cysteine 162, and cysteine 185/cysteine 197. 2 cysteine pairs are disulfide-bonded: cysteine 486-cysteine 491 and cysteine 497-cysteine 551. 4 N-linked (GlcNAc...) asparagine glycosylation sites follow: asparagine 501, asparagine 512, asparagine 574, and asparagine 606. A disulfide bond links cysteine 616 and cysteine 622. 4 N-linked (GlcNAc...) asparagine glycosylation sites follow: asparagine 657, asparagine 699, asparagine 843, and asparagine 859. Cysteine 695 and cysteine 704 are disulfide-bonded. 2 disulfides stabilise this stretch: cysteine 848/cysteine 906 and cysteine 913/cysteine 918. Positions 865 to 890 are disordered; that stretch reads PGVTPLSPQRRRRQLDPGGDQSSPPV. N-linked (GlcNAc...) asparagine glycans are attached at residues asparagine 925, asparagine 928, asparagine 937, and asparagine 971. A helical transmembrane segment spans residues 994–1021; the sequence is LWLVLVAVGAGLLLLGLIILLLWKCGFF. Cysteine 1018 carries the S-palmitoyl cysteine lipid modification. The Cytoplasmic portion of the chain corresponds to 1022 to 1053; the sequence is KRARTRALYEAKRQKAEMKSQPSETERLTDDY.

This sequence belongs to the integrin alpha chain family. As to quaternary structure, heterodimer of an alpha and a beta subunit. The alpha subunit is composed of a heavy and a light chain linked by a disulfide bond. Alpha-3 associates with beta-1. Interacts with HPS5. Interacts with FAP (seprase); the interaction occurs at the cell surface of invadopodia membrane in a collagen-dependent manner. Isoform 1 and isoform 2 are expressed in heart and brain. Only isoform 1 is detected in lung.

The protein localises to the cell membrane. It is found in the cell projection. The protein resides in the invadopodium membrane. It localises to the filopodium membrane. In terms of biological role, integrin alpha-3/beta-1 is a receptor for fibronectin, laminin, collagen, epiligrin, thrombospondin and CSPG4. Integrin alpha-3/beta-1 provides a docking site for FAP (seprase) at invadopodia plasma membranes in a collagen-dependent manner and hence may participate in the adhesion, formation of invadopodia and matrix degradation processes, promoting cell invasion. Alpha-3/beta-1 may mediate with LGALS3 the stimulation by CSPG4 of endothelial cells migration. The sequence is that of Integrin alpha-3 (Itga3) from Mus musculus (Mouse).